The primary structure comprises 729 residues: MDNNPPTSTGKCPFTHGSVTASGKSNTDWWPNALNLDILHQHDRKTNPLGDDFSYAAAFKTLDLQAVKNDLKALMTDSQDWWPADWGHYGGLFIRMAWHSAGSYRIADGRGGAGTGNQRFAPLNSWPDNGNLDKARRLLWPIKKKYGNKLSWADLMILAGNMAYESMGLKTFGFGGGREDIWHPEKDVYWGSEKEWLAKSGGEGSRYSGERDLENPLAAVMMGLIYVNPEGVDGNPDPLRTAKDIRETFARMAMNDEETVALTAGGHTVGKAHGNGNAANLGPDPEAADVEEQGLGWVNHKTRGIGRDTVTSGIEGAWTTHPTKWDNGYFDMLLNHDWELTKSPAGAWQWKPVSIKEEDMPVDVEDPSIRCTPLMTDADMAMKMDPEYRKISERFYSDPAYFSEVFARAWFKLTHRDLGPKARYLGADVPAEDLIWQDPVPTVDYTLSDADIADLKAKILASGLSVAELVATAWDSARTFRGSDFRGGANGARIRLAPQKDWEGNEPARLQKVLGVFAGIQSGLSKKVSIADLIVVGGAAAVEKAARDAGVNITVPFAPGRGDATDAQTDAESFAPLEPVHDGFRNWVKKDYAVQPEEMLLDRAQLMGLTAPEMTVLVGGMRVLGANYGGSKNGVFTDKVGVLSNDFFVNLTDMAYQWKPTGKNSYNIVERNTGTVKWSATRVDLVFGSNSILRSYAEVYAQDDNREKFVRDFVKAWVKVMNADRFDLK.

Positions 98-226 (WHSAGSYRIA…LAAVMMGLIY (129 aa)) form a cross-link, tryptophyl-tyrosyl-methioninium (Trp-Tyr) (with M-252). The Proton acceptor role is filled by His-99. Positions 226–252 (YVNPEGVDGNPDPLRTAKDIRETFARM) form a cross-link, tryptophyl-tyrosyl-methioninium (Tyr-Met) (with W-98). His-267 lines the heme b pocket.

It belongs to the peroxidase family. Peroxidase/catalase subfamily. Homodimer or homotetramer. Heme b serves as cofactor. Formation of the three residue Trp-Tyr-Met cross-link is important for the catalase, but not the peroxidase activity of the enzyme.

It carries out the reaction H2O2 + AH2 = A + 2 H2O. The catalysed reaction is 2 H2O2 = O2 + 2 H2O. Bifunctional enzyme with both catalase and broad-spectrum peroxidase activity. The protein is Catalase-peroxidase 1 of Cellvibrio japonicus (strain Ueda107) (Pseudomonas fluorescens subsp. cellulosa).